Reading from the N-terminus, the 460-residue chain is MKTPETLAFECETGNYHTFCPISCVAWLYQKIEDSFFLVVGTKTCGYFLQNALGVMIFAEPRYAMAELEEGDISAQLNDQKELEKICLQIRDDRNPSVIIWIGTCTTEIIKMDLEGIAPKLEKQIGIPIIVARANGLDYAFTQGEDTVLAAMAHRCPEYKHCTTNLKNRTDEMARIDNHTTNKSPFEASKLTRFNLVLFGSLSSSIASQLNLELKRQSISVSGWLPSQKYEELPGLGEGIYVCGVNPFLSRTATTLMRRRKCKLVGAPFPIGPDGTRAWIEKICSVFDIKSYGLENRESEIWENVKDYIQVINGKSVFFMGDNLLEISLARFLIRCGMIVYEVGIPYMDRRYQAAELLFLQHTCRKMKTPLPRIVEKPDNYGQIQRMHELKPHLAITGMAHANPLEARNIDTKWSVEFTFAQIHGFSSVRDILELVTRPLRRRGVITPGFRSLSKQTTGD.

3 residues coordinate [4Fe-4S] cluster: C20, C45, and C105.

This sequence belongs to the BchN/ChlN family. Protochlorophyllide reductase is composed of three subunits; ChlL, ChlN and ChlB. Forms a heterotetramer of two ChlB and two ChlN subunits. It depends on [4Fe-4S] cluster as a cofactor.

It is found in the plastid. The protein resides in the chloroplast. It carries out the reaction chlorophyllide a + oxidized 2[4Fe-4S]-[ferredoxin] + 2 ADP + 2 phosphate = protochlorophyllide a + reduced 2[4Fe-4S]-[ferredoxin] + 2 ATP + 2 H2O. Its pathway is porphyrin-containing compound metabolism; chlorophyll biosynthesis (light-independent). Functionally, component of the dark-operative protochlorophyllide reductase (DPOR) that uses Mg-ATP and reduced ferredoxin to reduce ring D of protochlorophyllide (Pchlide) to form chlorophyllide a (Chlide). This reaction is light-independent. The NB-protein (ChlN-ChlB) is the catalytic component of the complex. The protein is Light-independent protochlorophyllide reductase subunit N of Adiantum capillus-veneris (Maidenhair fern).